Reading from the N-terminus, the 237-residue chain is DNA repair protein RecO (237 aa).

Belongs to the RecO family.

Its function is as follows. Involved in DNA repair and RecF pathway recombination. This Actinobacillus succinogenes (strain ATCC 55618 / DSM 22257 / CCUG 43843 / 130Z) protein is DNA repair protein RecO.